The sequence spans 353 residues: Protein Wnt-11b-1 (353 aa).

A signal peptide spans 1-22 (MAQIHHCVTLLLILCCSGLCGA). Asn31, Asn38, and Asn88 each carry an N-linked (GlcNAc...) asparagine glycan. Cystine bridges form between Cys78–Cys89, Cys128–Cys136, Cys138–Cys155, Cys208–Cys222, and Cys210–Cys217. The O-palmitoleoyl serine; by PORCN moiety is linked to residue Ser214. Sulfotyrosine is present on residues Tyr274 and Tyr281. Intrachain disulfides connect Cys282-Cys313, Cys298-Cys308, Cys312-Cys352, Cys328-Cys343, Cys330-Cys340, and Cys335-Cys336. N-linked (GlcNAc...) asparagine glycosylation is present at Asn299.

This sequence belongs to the Wnt family. Homodimer. Secreted homodimers form a complex with wnt5a homodimers; tyrosine sulfation of both wnt11 and wnt5a by tpst1 is required for this interaction. Interacts with the transmembrane receptor fzd7/fz7. Interacts with lrp6 and ryk. Interacts with tdgf1/frl1. Interacts weakly with frzb1 and strongly with frzb2/crescent. Interaction with frzb2/crescent antagonizes wnt11 function in the neuroectoderm, but enhances it in mesodermal tissue. In terms of processing, glycosylation is required for protein secretion. Post-translationally, palmitoleoylation is required for efficient binding to frizzled receptors. Depalmitoleoylation leads to Wnt signaling pathway inhibition.

The protein resides in the secreted. The protein localises to the extracellular space. Its subcellular location is the extracellular matrix. Functionally, ligand for the frizzled7 transmembrane receptor. Primarily acts via non-canonical Wnt pathways mediated by either Ca(2+) and PKC, or by JNK and dvl2/dsh. Depending on the cellular context, can also signal via the canonical Wnt pathway mediated by beta-catenin and dvl2/dsh. May also inhibit canonical Wnt signaling. Maternally initiates dorsal/ventral axis formation by a canonical route, which signals via lrp6. In a complex with wnt5a, activates the canonical and non-canonical processes involved in axis formation. In the non-canonical pathway, acts through fzd7/fz7 to induce phosphorylation of dvl2/dsh. Signals through a non-canonical Wnt pathway to regulate convergent extension movements during gastrulation. Interactions with the secreted Wnt antagonist sfrp5 to coordinate foregut development, acting via a non-canonical wnt pathway whereby sfrp5 restricts wnt11b activity to prevent inappropriate foregut formation. Mediates cardiogenesis via non-canonical Wnt signaling involving JNK-activation and PKC. Acts redundantly with wnt11/wnt11r during pronephros induction. In Xenopus tropicalis (Western clawed frog), this protein is Protein Wnt-11b-1.